Consider the following 657-residue polypeptide: Zinc finger protein 630 (657 aa).

The region spanning 8-79 (VTFEDVAVDF…ESELSRWIYP (72 aa)) is the KRAB domain. 2 C2H2-type zinc fingers span residues 263 to 285 (NVCS…QRIH) and 291 to 313 (YVCG…QRIH). The C2H2-type 3; degenerate zinc finger occupies 319–341 (YECTKYGRAFSRKSPFTVHQRVH). 9 C2H2-type zinc fingers span residues 347 to 369 (YECF…QRVH), 375 to 397 (FECS…QITH), 403 to 425 (YECT…QRTH), 431 to 453 (YKCG…QRIH), 459 to 481 (YVCT…QRLH), 487 to 509 (YMCT…QRIH), 515 to 537 (YQCG…LRVH), 543 to 565 (YECT…QRGH), and 571 to 593 (YECS…QKTH). A C2H2-type 13; degenerate zinc finger spans residues 599 to 621 (PECAESGMTFFWKSQMITYQRRH). The C2H2-type 14; degenerate zinc-finger motif lies at 627–649 (SRCSDCGKAFCQHVYFTGHQNPY).

This sequence belongs to the krueppel C2H2-type zinc-finger protein family.

It localises to the nucleus. May be involved in transcriptional regulation. The protein is Zinc finger protein 630 (ZNF630) of Homo sapiens (Human).